The chain runs to 508 residues: Photosystem II CP47 reaction center protein (508 aa).

The next 6 helical transmembrane spans lie at alanine 21–serine 36, isoleucine 101–tryptophan 115, glycine 140–phenylalanine 156, isoleucine 203–serine 218, valine 237–valine 252, and serine 457–arginine 472.

Belongs to the PsbB/PsbC family. PsbB subfamily. In terms of assembly, PSII is composed of 1 copy each of membrane proteins PsbA, PsbB, PsbC, PsbD, PsbE, PsbF, PsbH, PsbI, PsbJ, PsbK, PsbL, PsbM, PsbT, PsbX, PsbY, PsbZ, Psb30/Ycf12, at least 3 peripheral proteins of the oxygen-evolving complex and a large number of cofactors. It forms dimeric complexes. The cofactor is Binds multiple chlorophylls. PSII binds additional chlorophylls, carotenoids and specific lipids..

It is found in the plastid. Its subcellular location is the chloroplast thylakoid membrane. In terms of biological role, one of the components of the core complex of photosystem II (PSII). It binds chlorophyll and helps catalyze the primary light-induced photochemical processes of PSII. PSII is a light-driven water:plastoquinone oxidoreductase, using light energy to abstract electrons from H(2)O, generating O(2) and a proton gradient subsequently used for ATP formation. This Nandina domestica (Heavenly bamboo) protein is Photosystem II CP47 reaction center protein.